Consider the following 105-residue polypeptide: Sec-independent protein translocase protein TatA (105 aa).

The helical transmembrane segment at 1-21 (MSLGPWEIGIIVLLIIVLFGA) threads the bilayer. Positions 41-50 (EVKEMNKDGD) are enriched in basic and acidic residues. The segment at 41–105 (EVKEMNKDGD…QNYEDPNRTS (65 aa)) is disordered. The segment covering 52–92 (PEQQQQPQQQIAPNQIEAPQPNFEQHYQGQQVQQPQNPQTP) has biased composition (low complexity). Residues 96-105 (QNYEDPNRTS) show a composition bias toward basic and acidic residues.

The protein belongs to the TatA/E family. As to quaternary structure, the Tat system comprises two distinct complexes: a TatABC complex, containing multiple copies of TatA, TatB and TatC subunits, and a separate TatA complex, containing only TatA subunits. Substrates initially bind to the TatABC complex, which probably triggers association of the separate TatA complex to form the active translocon.

It localises to the cell membrane. In terms of biological role, part of the twin-arginine translocation (Tat) system that transports large folded proteins containing a characteristic twin-arginine motif in their signal peptide across membranes. TatA could form the protein-conducting channel of the Tat system. The protein is Sec-independent protein translocase protein TatA of Corynebacterium glutamicum (strain ATCC 13032 / DSM 20300 / JCM 1318 / BCRC 11384 / CCUG 27702 / LMG 3730 / NBRC 12168 / NCIMB 10025 / NRRL B-2784 / 534).